The primary structure comprises 395 residues: Inactive serine protease 54 (395 aa).

The N-terminal stretch at 1–30 (MVSAAGLSGDGKMRGVLLVLLGLLYSSTSC) is a signal peptide. Residues 37 to 269 (VFYGPDPKEG…YSKWITSKAE (233 aa)) enclose the Peptidase S1 domain. An N-linked (GlcNAc...) asparagine glycan is attached at N123. 3 cysteine pairs are disulfide-bonded: C164–C227, C195–C205, and C217–C248. Residues 324–348 (RLGNSSRDSLDVREKDVKESGRSPE) are disordered. N-linked (GlcNAc...) asparagine glycosylation is present at N327. Basic and acidic residues predominate over residues 331–345 (DSLDVREKDVKESGR).

The protein belongs to the peptidase S1 family. Plasma kallikrein subfamily.

It localises to the secreted. In Homo sapiens (Human), this protein is Inactive serine protease 54 (PRSS54).